Here is a 131-residue protein sequence, read N- to C-terminus: uncharacterized protein (131 aa).

This is an uncharacterized protein from Archaeoglobus fulgidus (strain ATCC 49558 / DSM 4304 / JCM 9628 / NBRC 100126 / VC-16).